Consider the following 305-residue polypeptide: Acetylglutamate kinase (305 aa).

Substrate is bound by residues 78 to 79 (GG), arginine 100, and asparagine 202.

Belongs to the acetylglutamate kinase family. ArgB subfamily.

Its subcellular location is the cytoplasm. The enzyme catalyses N-acetyl-L-glutamate + ATP = N-acetyl-L-glutamyl 5-phosphate + ADP. It participates in amino-acid biosynthesis; L-arginine biosynthesis; N(2)-acetyl-L-ornithine from L-glutamate: step 2/4. Its function is as follows. Catalyzes the ATP-dependent phosphorylation of N-acetyl-L-glutamate. The chain is Acetylglutamate kinase from Polaromonas sp. (strain JS666 / ATCC BAA-500).